A 964-amino-acid polypeptide reads, in one-letter code: Insulin receptor substrate 1 (964 aa).

Residues 8 to 109 (GMALSGNLKK…WLDKLLVLQR (102 aa)) enclose the PH domain. An IRS-type PTB domain is found at 122 to 236 (YDQVWQVVIQ…SAMSAKTESN (115 aa)). The segment at 249–268 (LSHEPMRKRSSSANEASKPI) is disordered. 3 positions are modified to phosphoserine: Ser286, Ser287, and Ser342. Residue Tyr410 is modified to Phosphotyrosine; by INSR. The YXXM motif 1 signature appears at 410 to 413 (YIPM). Residues 527–560 (ASNRSQSSIGKEGSSYGSSANRQKKSTSAPLLSL) form a disordered region. Residues 528–560 (SNRSQSSIGKEGSSYGSSANRQKKSTSAPLLSL) are compositionally biased toward polar residues. The residue at position 554 (Ser554) is a Phosphoserine. The YXXM motif 2 motif lies at 640–643 (YLEM). Residues 698 to 712 (EKWREQPSRSEEKKS) show a composition bias toward basic and acidic residues. Positions 698–735 (EKWREQPSRSEEKKSNSPLNDNPFSLKPTNVESKSKSH) are disordered. The segment covering 713–729 (NSPLNDNPFSLKPTNVE) has biased composition (polar residues). The residue at position 907 (Tyr907) is a Phosphotyrosine; by INSR. The segment at 921–964 (AKYLKRGSRESPPVSACPEDGNTYARIDFDQSDSSSSSSNIFNT) is disordered. Phosphoserine is present on residues Ser928 and Ser931. A Phosphotyrosine; by INSR modification is found at Tyr944. Low complexity predominate over residues 952 to 964 (SDSSSSSSNIFNT).

Bindings to phosphatidylinositol 3-kinase and SHP2.

In terms of biological role, activates phosphatidylinositol 3-kinase when bound to the regulatory p85 subunit. May mediate the control of various cellular processes by insulin-like peptides. When phosphorylated by the insulin receptor binds specifically to various cellular proteins containing SH2 domains. Involved in control of cell proliferation, cell size, and body and organ growth throughout development. Also has a role in a signaling pathway controlling the physiological response required to endure periods of low nutrient conditions. Insulin/insulin-like growth factor (IGF) signaling pathway has a role in regulating aging and is necessary in the ovary for vitellogenic maturation. The protein is Insulin receptor substrate 1 of Drosophila sechellia (Fruit fly).